We begin with the raw amino-acid sequence, 85 residues long: Small ribosomal subunit protein bS18 (85 aa).

Belongs to the bacterial ribosomal protein bS18 family. Part of the 30S ribosomal subunit. Forms a tight heterodimer with protein bS6.

In terms of biological role, binds as a heterodimer with protein bS6 to the central domain of the 16S rRNA, where it helps stabilize the platform of the 30S subunit. The protein is Small ribosomal subunit protein bS18 of Solidesulfovibrio magneticus (strain ATCC 700980 / DSM 13731 / RS-1) (Desulfovibrio magneticus).